We begin with the raw amino-acid sequence, 157 residues long: MNCRVVVEAAVPVYDVASADEAVRIAISKTGEMLNPDLNYVEINMGDRHCPHCGETLEPAFLAADESLVALELEMTVFNVERDEHAARIARKEIGQRLENIPLDVLEIEEIPEESDETTEDESSSAESEADADDPPSDQSADESDDVLPEFEELIDE.

The interval 105–157 (VLEIEEIPEESDETTEDESSSAESEADADDPPSDQSADESDDVLPEFEELIDE) is disordered. Residues 106–157 (LEIEEIPEESDETTEDESSSAESEADADDPPSDQSADESDDVLPEFEELIDE) show a composition bias toward acidic residues.

This sequence belongs to the UPF0212 family.

In Haloarcula marismortui (strain ATCC 43049 / DSM 3752 / JCM 8966 / VKM B-1809) (Halobacterium marismortui), this protein is UPF0212 protein rrnAC1165.